Reading from the N-terminus, the 200-residue chain is Putative manganese exporter (200 aa).

A run of 6 helical transmembrane segments spans residues 13–33 (TEHV…AEIG), 53–73 (IIAA…WLGV), 81–101 (PDIL…WILI), 110–130 (SIST…AEIG), 150–170 (WVIV…VLIG), and 180–200 (GLIR…TAFF).

It belongs to the GDT1 family.

The protein resides in the cell inner membrane. In terms of biological role, involved in manganese homeostasis. May function as a manganese exporter. This Vibrio cholerae serotype O1 (strain ATCC 39541 / Classical Ogawa 395 / O395) protein is Putative manganese exporter.